The chain runs to 446 residues: Tubulin alpha-2 chain (446 aa).

Residues 1-4 carry the MREC motif motif; the sequence is MREC. Residues Q11, E68, S137, G141, T142, S176, N203, and N225 each contribute to the GTP site. Residue E68 participates in Mg(2+) binding. E251 is a catalytic residue.

The protein belongs to the tubulin family. Dimer of alpha and beta chains. A typical microtubule is a hollow water-filled tube with an outer diameter of 25 nm and an inner diameter of 15 nM. Alpha-beta heterodimers associate head-to-tail to form protofilaments running lengthwise along the microtubule wall with the beta-tubulin subunit facing the microtubule plus end conferring a structural polarity. Microtubules usually have 13 protofilaments but different protofilament numbers can be found in some organisms and specialized cells. Mg(2+) serves as cofactor. In terms of processing, some glutamate residues at the C-terminus are polyglycylated, resulting in polyglycine chains on the gamma-carboxyl group. Glycylation is mainly limited to tubulin incorporated into axonemes (cilia and flagella) whereas glutamylation is prevalent in neuronal cells, centrioles, axonemes, and the mitotic spindle. Both modifications can coexist on the same protein on adjacent residues, and lowering polyglycylation levels increases polyglutamylation, and reciprocally. The precise function of polyglycylation is still unclear. Some glutamate residues at the C-terminus are polyglutamylated, resulting in polyglutamate chains on the gamma-carboxyl group. Polyglutamylation plays a key role in microtubule severing by spastin (SPAST). SPAST preferentially recognizes and acts on microtubules decorated with short polyglutamate tails: severing activity by SPAST increases as the number of glutamates per tubulin rises from one to eight, but decreases beyond this glutamylation threshold. In terms of tissue distribution, testis specific.

It is found in the cytoplasm. The protein localises to the cytoskeleton. It catalyses the reaction GTP + H2O = GDP + phosphate + H(+). In terms of biological role, tubulin is the major constituent of microtubules, a cylinder consisting of laterally associated linear protofilaments composed of alpha- and beta-tubulin heterodimers. Microtubules grow by the addition of GTP-tubulin dimers to the microtubule end, where a stabilizing cap forms. Below the cap, tubulin dimers are in GDP-bound state, owing to GTPase activity of alpha-tubulin. The sequence is that of Tubulin alpha-2 chain from Gallus gallus (Chicken).